The sequence spans 517 residues: Aldehyde dehydrogenase, mitochondrial (517 aa).

The N-terminal 17 residues, 1 to 17, are a transit peptide targeting the mitochondrion; the sequence is MLRAAARFGPRLGRRLL. The short motif at 9–24 is the SIFI-degron element; the sequence is GPRLGRRLLSAAATQA. 4 positions are modified to N6-acetyllysine: K52, K73, K78, and K159. 262–267 lines the NAD(+) pocket; that stretch reads GSTEIG. E285 acts as the Proton acceptor in catalysis. Catalysis depends on C319, which acts as the Nucleophile. N6-acetyllysine is present on residues K368, K383, K426, K428, and K451.

It belongs to the aldehyde dehydrogenase family. In terms of assembly, homotetramer. In response to mitochondrial stress, the precursor protein is ubiquitinated by the SIFI complex in the cytoplasm before mitochondrial import, leading to its degradation. Within the SIFI complex, UBR4 initiates ubiquitin chain that are further elongated or branched by KCMF1.

Its subcellular location is the mitochondrion matrix. It carries out the reaction an aldehyde + NAD(+) + H2O = a carboxylate + NADH + 2 H(+). The protein operates within alcohol metabolism; ethanol degradation; acetate from ethanol: step 2/2. Functionally, required for clearance of cellular formaldehyde, a cytotoxic and carcinogenic metabolite that induces DNA damage. This chain is Aldehyde dehydrogenase, mitochondrial (ALDH2), found in Homo sapiens (Human).